A 368-amino-acid polypeptide reads, in one-letter code: L-cysteine desulfhydrase Cds1 (368 aa).

K67 is modified (N6-(pyridoxal phosphate)lysine). Pyridoxal 5'-phosphate contacts are provided by residues 203-207 (GTGGT) and S299.

This sequence belongs to the cysteine synthase/cystathionine beta-synthase family. Cds1 subfamily. Requires pyridoxal 5'-phosphate as cofactor.

It localises to the cytoplasm. The enzyme catalyses L-cysteine + H2O = hydrogen sulfide + pyruvate + NH4(+) + H(+). Functionally, a cysteine desulfhydrase that generates hydrogen sulfide, H(2)S. The H(2)S produced by this enzyme stimulates respiration in M.tuberculosis, mediated primarily via cytochrome bd with a lesser contribution from cytochrome bc1/aa3. H(2)S modulates the balance between respiration and glycolysis, and also contributes to redox homeostasis. Probably eliminates toxic levels of Cys (which can induce oxidative stress). This Mycobacterium tuberculosis (strain ATCC 25177 / H37Ra) protein is L-cysteine desulfhydrase Cds1.